Here is a 104-residue protein sequence, read N- to C-terminus: Zinc finger C2H2 protein ECU02_0310 (104 aa).

The C2H2-type zinc finger occupies 56 to 80; that stretch reads FYCCECDRHFITEKVLMEHKRSNPH.

The protein belongs to the ZNF593/BUD20 C2H2-type zinc-finger protein family. In terms of assembly, associates with pre-60S ribosomal particles; released from the pre-60S particle very early in the cytoplasm.

The protein localises to the nucleus. The protein resides in the cytoplasm. Its function is as follows. Involved in pre-60S ribosomal particles maturation by promoting the nuclear export of the 60S ribosome. The sequence is that of Zinc finger C2H2 protein ECU02_0310 from Encephalitozoon cuniculi (strain GB-M1) (Microsporidian parasite).